The sequence spans 654 residues: Beta-mannosyltransferase 2 (654 aa).

Topologically, residues 1-37 are cytoplasmic; the sequence is MLAWLRHRIRSYNTSTYSSILPSASFGKVYKIGTKLN. The helical transmembrane segment at 38-58 threads the bilayer; that stretch reads FTLLALCLLLACSVFFNYFYL. The Extracellular segment spans residues 59–654; the sequence is ADNNGLDIDT…ANGNGKGSSS (596 aa).

The protein belongs to the BMT family.

It is found in the membrane. Beta-mannosyltransferase involved in cell wall biosynthesis. Required for the addition of beta-mannose to the acid-labile fraction of cell wall phosphopeptidomannan. In Candida albicans (strain SC5314 / ATCC MYA-2876) (Yeast), this protein is Beta-mannosyltransferase 2 (RHD1).